A 137-amino-acid chain; its full sequence is MRILGLDIGNKTIGVALSDPLGITAQGITTIKRKGEDRDIEELKAICDKYKVEVIVCGLPKNMNGTLGPQSEKVLKFCNIIEEVINLPIKMWDERLTTVAANKAMLEADLSRAKRKKIVDKMAATYILQGYLDRISK.

The protein belongs to the YqgF nuclease family.

It is found in the cytoplasm. Functionally, could be a nuclease involved in processing of the 5'-end of pre-16S rRNA. In Clostridium kluyveri (strain NBRC 12016), this protein is Putative pre-16S rRNA nuclease.